Reading from the N-terminus, the 764-residue chain is Protein Lines homolog 1 (764 aa).

Disordered stretches follow at residues 615 to 668 (SQSQ…TSLC) and 682 to 702 (WEEQKEHSLEPLLSAESSSPF). The segment covering 645 to 654 (DSSEASEEET) has biased composition (acidic residues). Position 650 is a phosphoserine (serine 650). A compositionally biased stretch (polar residues) spans 658-668 (HLANSKQTSLC). Positions 691 to 702 (EPLLSAESSSPF) are enriched in low complexity.

It belongs to the protein lines family.

The protein is Protein Lines homolog 1 of Mus musculus (Mouse).